A 239-amino-acid chain; its full sequence is MRPRNNNLNLKFIRIYRWTPSNQAEAKFSVHPIHTSNCGPMILDALIKIKDEQDSSLAFRRSCREGICGSCSMNIDGINTLACLKPIKTNANIITIYPLPHMYIIKDLVPDLSNFFSQYKYIKPWLINNVPKKSEYLQSEKDRSELNGIYECILCACCSASCPSYWWNHDKYLGPAILLQAYRWLADSRDTNAKERLKLLGGKSKLFKCHTIMNCSRTCPKSLNPGKAIASIKHSINYS.

In terms of domain architecture, 2Fe-2S ferredoxin-type spans 24–99 (AEAKFSVHPI…NANIITIYPL (76 aa)). Residues cysteine 63, cysteine 68, cysteine 71, and cysteine 83 each coordinate [2Fe-2S] cluster. Positions 142 to 172 (DRSELNGIYECILCACCSASCPSYWWNHDKY) constitute a 4Fe-4S ferredoxin-type domain. The [4Fe-4S] cluster site is built by cysteine 152, cysteine 155, and cysteine 158. [3Fe-4S] cluster is bound at residue cysteine 162. Residue tryptophan 167 coordinates a ubiquinone. [3Fe-4S] cluster contacts are provided by cysteine 209 and cysteine 215. Cysteine 219 is a [4Fe-4S] cluster binding site.

This sequence belongs to the succinate dehydrogenase/fumarate reductase iron-sulfur protein family. Component of complex II composed of four subunits: a flavoprotein (FP), an iron-sulfur protein (IP), and a cytochrome b composed of a large and a small subunit. It depends on [2Fe-2S] cluster as a cofactor. [3Fe-4S] cluster is required as a cofactor. The cofactor is [4Fe-4S] cluster.

Its subcellular location is the mitochondrion inner membrane. It carries out the reaction a quinone + succinate = fumarate + a quinol. It functions in the pathway carbohydrate metabolism; tricarboxylic acid cycle; fumarate from succinate (eukaryal route): step 1/1. Iron-sulfur protein (IP) subunit of succinate dehydrogenase (SDH) that is involved in complex II of the mitochondrial electron transport chain and is responsible for transferring electrons from succinate to ubiquinone (coenzyme Q). The polypeptide is Succinate dehydrogenase [ubiquinone] iron-sulfur subunit (SDH2) (Porphyra purpurea (Red seaweed)).